Reading from the N-terminus, the 309-residue chain is Ribonuclease Z (309 aa).

Zn(2+) is bound by residues His63, His65, Asp67, His68, His145, Asp216, and His274. The active-site Proton acceptor is Asp67.

Belongs to the RNase Z family. In terms of assembly, homodimer. Zn(2+) is required as a cofactor.

The catalysed reaction is Endonucleolytic cleavage of RNA, removing extra 3' nucleotides from tRNA precursor, generating 3' termini of tRNAs. A 3'-hydroxy group is left at the tRNA terminus and a 5'-phosphoryl group is left at the trailer molecule.. Zinc phosphodiesterase, which displays some tRNA 3'-processing endonuclease activity. Probably involved in tRNA maturation, by removing a 3'-trailer from precursor tRNA. The protein is Ribonuclease Z of Streptococcus suis (strain 98HAH33).